The primary structure comprises 377 residues: UPF0754 membrane protein YheB (377 aa).

The next 2 helical transmembrane spans lie at 1 to 21 (MGIA…GAVT) and 357 to 377 (YLGG…VILF).

Belongs to the UPF0754 family.

The protein localises to the cell membrane. The sequence is that of UPF0754 membrane protein YheB (yheB) from Bacillus subtilis (strain 168).